A 295-amino-acid polypeptide reads, in one-letter code: Putative S-adenosyl-L-methionine-dependent methyltransferase Mvan_0910 (295 aa).

Residues Asp-126 and 155 to 156 (DL) each bind S-adenosyl-L-methionine.

It belongs to the UPF0677 family.

Exhibits S-adenosyl-L-methionine-dependent methyltransferase activity. The sequence is that of Putative S-adenosyl-L-methionine-dependent methyltransferase Mvan_0910 from Mycolicibacterium vanbaalenii (strain DSM 7251 / JCM 13017 / BCRC 16820 / KCTC 9966 / NRRL B-24157 / PYR-1) (Mycobacterium vanbaalenii).